Here is a 284-residue protein sequence, read N- to C-terminus: Tropomyosin Per a 7.0101 (284 aa).

Residues A22–K266 adopt a coiled-coil conformation.

It belongs to the tropomyosin family. As to quaternary structure, homodimer.

Tropomyosin, in association with the troponin complex, plays a central role in the calcium dependent regulation of muscle contraction. The sequence is that of Tropomyosin Per a 7.0101 from Periplaneta americana (American cockroach).